A 177-amino-acid chain; its full sequence is CASP-like protein 2U1 (177 aa).

The chain crosses the membrane as a helical span at residues 1–21 (MVLRIVASLLSIAALVLMAKD). Residues 22–48 (KQVVYLNLAGEELTLEAKHSYVEAFVY) are Cytoplasmic-facing. A helical transmembrane segment spans residues 49-69 (LVYSNGLVAIYCFLLVFALVF). Topologically, residues 70–80 (RLIDKAGCGKS) are extracellular. A helical membrane pass occupies residues 81–101 (AAWIIFLLDQGLAYVLLAAAA). Residues 102–131 (ASTEVAYVAKRGNNKVGWSEVCSTFGHFCN) are Cytoplasmic-facing. Residues 132 to 152 (LVGVSIVITFISVLAMATLSV) traverse the membrane as a helical segment. Residues 153–177 (MSARRLFKTYGPERKQISSNDAPAI) lie on the Extracellular side of the membrane.

This sequence belongs to the Casparian strip membrane proteins (CASP) family. As to quaternary structure, homodimer and heterodimers.

The protein resides in the cell membrane. The chain is CASP-like protein 2U1 from Osmunda lancea (Fern).